The primary structure comprises 363 residues: Crh-like protein 3 (363 aa).

An N-terminal signal peptide occupies residues 1–19 (MSLLYLVALFVASICSVTA). A disulfide bond links cysteine 25 and cysteine 32. One can recognise a GH16 domain in the interval 26–237 (NPLTTTCPPD…YSKAPFTMVL (212 aa)). N-linked (GlcNAc...) asparagine glycosylation is found at asparagine 41, asparagine 47, and asparagine 56. Residue glutamate 118 is the Nucleophile of the active site. Glutamate 122 serves as the catalytic Proton donor. Glutamate 122 is a binding site for chitin. Residues asparagine 127, asparagine 141, and asparagine 161 are each glycosylated (N-linked (GlcNAc...) asparagine). Arginine 203, tryptophan 207, and threonine 218 together coordinate chitin. N-linked (GlcNAc...) asparagine glycosylation is found at asparagine 252 and asparagine 269. Residues 298 to 318 (VYIGAGCVGAALLAGFIFFFI) traverse the membrane as a helical segment.

The protein belongs to the glycosyl hydrolase 16 family. CRH1 subfamily. In terms of processing, the GPI-like anchor contains a phosphoceramide lipid group. The anchor position has not been determined.

Its subcellular location is the cell membrane. The protein resides in the secreted. It localises to the cell wall. The enzyme catalyses Random endo-hydrolysis of N-acetyl-beta-D-glucosaminide (1-&gt;4)-beta-linkages in chitin and chitodextrins.. Its function is as follows. Dual chitinase/transglycosylase that plays a role in cell wall architecture. Chitinase and transglycosylase activities are coupled. Required for the polysaccharide cross-linking at the septa and the cell wall. More specifically, transfers chitin to 1,6-beta-glucan in the cell wall. The chain is Crh-like protein 3 from Aspergillus fumigatus (strain ATCC MYA-4609 / CBS 101355 / FGSC A1100 / Af293) (Neosartorya fumigata).